We begin with the raw amino-acid sequence, 275 residues long: Rhamnulose-1-phosphate aldolase (275 aa).

Glu117 is an active-site residue. The Zn(2+) site is built by His141, His143, and His212.

It belongs to the aldolase class II family. RhaD subfamily. In terms of assembly, homotetramer. Zn(2+) is required as a cofactor.

Its subcellular location is the cytoplasm. The enzyme catalyses L-rhamnulose 1-phosphate = (S)-lactaldehyde + dihydroxyacetone phosphate. Its pathway is carbohydrate degradation; L-rhamnose degradation; glycerone phosphate from L-rhamnose: step 3/3. Its function is as follows. Catalyzes the reversible cleavage of L-rhamnulose-1-phosphate to dihydroxyacetone phosphate (DHAP) and L-lactaldehyde. The polypeptide is Rhamnulose-1-phosphate aldolase (Salmonella paratyphi B (strain ATCC BAA-1250 / SPB7)).